The primary structure comprises 142 residues: Transcriptional regulator MraZ (142 aa).

SpoVT-AbrB domains lie at 5–46 and 75–118; these read THPV…DRSE and AAAQ…DSEA.

This sequence belongs to the MraZ family. As to quaternary structure, forms oligomers.

The protein localises to the cytoplasm. Its subcellular location is the nucleoid. The polypeptide is Transcriptional regulator MraZ (Tropheryma whipplei (strain TW08/27) (Whipple's bacillus)).